A 290-amino-acid chain; its full sequence is tRNA dimethylallyltransferase (290 aa).

9 to 16 (GPTASGKT) serves as a coordination point for ATP. Substrate is bound at residue 11 to 16 (TASGKT). The interaction with substrate tRNA stretch occupies residues 34 to 37 (DSTQ).

This sequence belongs to the IPP transferase family. Monomer. It depends on Mg(2+) as a cofactor.

The enzyme catalyses adenosine(37) in tRNA + dimethylallyl diphosphate = N(6)-dimethylallyladenosine(37) in tRNA + diphosphate. Catalyzes the transfer of a dimethylallyl group onto the adenine at position 37 in tRNAs that read codons beginning with uridine, leading to the formation of N6-(dimethylallyl)adenosine (i(6)A). The sequence is that of tRNA dimethylallyltransferase from Phytoplasma australiense.